A 39-amino-acid chain; its full sequence is uncharacterized protein (39 aa).

The first 21 residues, 1–21 (MHLRSRWWLALLYCKDPVSRS), serve as a signal peptide directing secretion.

This is an uncharacterized protein from Saccharomyces cerevisiae (strain ATCC 204508 / S288c) (Baker's yeast).